A 419-amino-acid chain; its full sequence is MTTQLEQAWELAKQRFAAVGIDVEEALRQLDRLPVSMHCWQGDDVSGFENPEGSLTGGIQATGNYPGKARNASELRADLEQAMRLIPGPKRLNLHAIYLESDTPVARDQIKPEHFKNWVEWAKTNQLGLDFNPSCFSHPLSADGFTLSHADDSIRQFWIDHCKASRRVSAYFGEQLGTPSVMNIWIPDGMKDITVDRLAPRQRLLAALDEVISEKLDPAHHIDAVESKLFGIGAESYTVGSNEFYMGYATSRQTALCLDAGHFHPTEVISDKISAAMLYVPQLLLHVSRPVRWDSDHVVLLDDETQAIASEIVRHDLFDRVHIGLDFFDASINRIAAWVIGTRNMKKALLRALLEPTAELRKLEAAGDYTARLALLEEQKSLPWQAVWKMYCQRHDTPAGSEWLENVRAYEKEILSRRG.

Histidine 262, aspartate 294, and aspartate 296 together coordinate Mn(2+).

It belongs to the rhamnose isomerase family. Homotetramer. It depends on Mn(2+) as a cofactor.

The protein resides in the cytoplasm. It catalyses the reaction L-rhamnopyranose = L-rhamnulose. It functions in the pathway carbohydrate degradation; L-rhamnose degradation; glycerone phosphate from L-rhamnose: step 1/3. Catalyzes the interconversion of L-rhamnose and L-rhamnulose. The chain is L-rhamnose isomerase from Escherichia coli O6:H1 (strain CFT073 / ATCC 700928 / UPEC).